Here is a 25-residue protein sequence, read N- to C-terminus: Omega conotoxin-CVIF (25 aa).

Disulfide bonds link Cys1–Cys16, Cys8–Cys20, and Cys15–Cys25. Cys25 bears the Cysteine amide mark.

The protein belongs to the conotoxin O1 superfamily. In terms of tissue distribution, expressed by the venom duct.

Its subcellular location is the secreted. In terms of biological role, omega-conotoxins act at presynaptic membranes, they bind and block voltage-gated calcium channels. This toxin blocks N-type calcium channels (Cav2.2/CACNA1B). It shows a higher potency when Cav2.2/CACNA1B is only expressed with the ancillary subunit CACNB3 (IC(50)=0.1 nM) than on Cav2.2/CACNA1B expressed with the ancillary subunits CACNA2D1 and CACNB3 (IC(50)=19.9 nM). The Cav2.2/CACNA1B block by this toxin is voltage-independent, whereas the recovery from toxin block is voltage-dependent. There is a low recovery at physiological membrane potential and a high recovery with hyperpolarized potential. This indicates that the toxin has a higher affinity for Cav2.2/CACNA1B in the inactivated state. It is noteworthy that ancillary subunits beta modulate recovery from this toxin block. Cav2.2/CACNA1B expressed with the ancillary subunit CACNB2a (isoform 2a) almost recover completely from this toxin block, whereas an expression with CACNB3 exhibits relatively weak recovery. Inhibition by this toxin of excitatory synaptic transmission is reversible. In vivo, when tested on rat model of persistent pain, this toxin blocks chronic pain behavior. The chain is Omega conotoxin-CVIF from Conus catus (Cat cone).